The following is a 466-amino-acid chain: MKYNNGKVSDVKIAYIGGGSRGWAWTFMTDLAMEPNMSGKISLYDIDQEAAKNNEIIGNMITRRDDTVGKWNYETANTMEAALTGADFVVISILPGTFDEMEADVHMPERLGIYQSVGDTAGPGGMMRALRTIPMFVTIANAIKEYSPKAWVINYTNPMSMCVKTLYHVFPEIKAFGCCHEVFGTQKVLKGIAEQELKIDRIDRNDIHVNVLGINHFTWFNYASYQGIDLFPIYCKYIEDHFEEGFEEKDENWANASFACKHRVKFDLFNEFGLIAAAGDRHLTEFMPSERYLKDKETVADWNFGLTTVEWRKKDLEDRLNKSHRLVSGEEEIKLEPSGEEGILLIKALCGLTRVISNVNIPNTNLQIENLPSTAIVETNAVFERDSIRPIMAGEMPENVVKLTMPHILNHEYIMEAALTFDKSLVVKAFEQDPLVKDMATKEEVEKLVEDMLDATKAYLPKEWNL.

11–78 (VKIAYIGGGS…GKWNYETANT (68 aa)) provides a ligand contact to NAD(+). Asn157 is a substrate binding site. Cys179 is a Mn(2+) binding site. His180 acts as the Proton donor in catalysis. His216 provides a ligand contact to Mn(2+).

It belongs to the glycosyl hydrolase 4 family. As to quaternary structure, homotetramer. NAD(+) is required as a cofactor. The cofactor is Mn(2+).

It catalyses the reaction [(1-&gt;4)-alpha-D-galacturonosyl](n) + H2O = alpha-D-galacturonate + [(1-&gt;4)-alpha-D-galacturonosyl](n-1). Functionally, alpha-galacturonidase able to catalyze the hydrolysis of the chromogenic substrate p-nitrophenyl-alpha-D-galacturonic acid (pNPalphaGalUA). It is probable that alpha-1,4-di-galacturonate (GalUA(2)) is the naturally occurring substrate. This is Alpha-galacturonidase from Lachnoclostridium phytofermentans (strain ATCC 700394 / DSM 18823 / ISDg) (Clostridium phytofermentans).